The following is a 1022-amino-acid chain: MYFCWGADSRELQRRRTAGSPGAELLQAASGERHSLLLLTNHRVLSCGDNSRGQLGRRGAQRGELPEPIQALETLIVDLVSCGKEHSLAVCHKGRVFAWGAGSEGQLGIGEFKEISFTPKKIMTLNDIKIIQVSCGHYHSLALSKDSQVFSWGKNSHGQLGLGKEFPSQASPQRVRSLEGIPLAQVAAGGAHSFALSLCGTSFGWGSNSAGQLALSGRNVPVQSNKPLSVGALKNLGVVYISCGDAHTAVLTQDGKVFTFGDNRSGQLGYSPTPEKRGPQLVERIDGLVSQIDCGSYHTLAYVHTTGQVVSFGHGPSDTSKPTHPEALTENFDISCLISAEDFVDVQVKHIFAGTYANFVTTHQDTSSTRAPGKTLPEISRISQSMAEKWIAVKRRSTEHEMAKSEIRMIFSSPACLTASFLKKRGTGETTSIDVDLEMARDTFKKLTKKEWISSMITTCLEDDLLRALPCHSPHQEALSVFLLLPECPVMHDSKNWKNLVVPFAKAVCEMSKQSLQVLKKCWAFLQESSLNPLIQMLKAAIISQLLHQTKTEQDHCNVKALLGMMKELHKVNKANCRLPENTFNINELSNLLNFYIDRGRQLFRDNHLIPAETPSPVIFSDFPFIFNSLSKIKLLQADSHIKMQMSEKKAYMLMHETILQKKDEFPPSPRFILRVRRSRLVKDALRQLSQAEATDFCKVLVVEFINEICPESGGVSSEFFHCMFEEMTKPEYGMFMYPEMGSCMWFPAKPKPEKKRYFLFGMLCGLSLFNLNVANLPFPLALYKKLLDQKPSLEDLKELSPRLGKSLQEVLDDAADDIGDALCIRFSIHWDQNDVDLIPNGISIPVDQTNKRDYVSKYIDYIFNVSVKAVYEEFQRGFYRVCEKEILRHFYPEELMTAIIGNTDYDWKQFEQNSKYEQGYQKSHPTIQLFWKAFHKLTLDEKKKFLFFLTGRDRLHARGIQKMEIVFRCPETFSERDHPTSITCHNILSLPKYSTMERMEEALQVAINNNRGFVSPMLTQS.

RCC1 repeat units follow at residues 41–92 (NHRV…AVCH), 93–145 (KGRV…ALSK), 147–198 (SQVF…ALSL), 200–253 (GTSF…VLTQ), and 254–304 (DGKV…AYVH). Residues 693–1017 (EATDFCKVLV…INNNRGFVSP (325 aa)) form the HECT domain. C985 serves as the catalytic Glycyl thioester intermediate.

As to expression, detected in brain, heart, placenta and testis.

The protein localises to the cytoplasm. It is found in the cytosol. It carries out the reaction S-ubiquitinyl-[E2 ubiquitin-conjugating enzyme]-L-cysteine + [acceptor protein]-L-lysine = [E2 ubiquitin-conjugating enzyme]-L-cysteine + N(6)-ubiquitinyl-[acceptor protein]-L-lysine.. It functions in the pathway protein modification; protein ubiquitination. In terms of biological role, E3 ubiquitin-protein ligase which accepts ubiquitin from an E2 ubiquitin-conjugating enzyme in the form of a thioester and then directly transfers the ubiquitin to targeted substrates. The polypeptide is Probable E3 ubiquitin-protein ligase HERC6 (HERC6) (Homo sapiens (Human)).